Here is a 593-residue protein sequence, read N- to C-terminus: Methionine--tRNA ligase (593 aa).

A 'HIGH' region motif is present at residues 7 to 17 (PYANGPRHIGH). Zn(2+) contacts are provided by C139, C142, C152, and C155. A 'KMSKS' region motif is present at residues 343–347 (KFSTS). T346 serves as a coordination point for ATP.

It belongs to the class-I aminoacyl-tRNA synthetase family. MetG type 1 subfamily. As to quaternary structure, monomer. Requires Zn(2+) as cofactor.

Its subcellular location is the cytoplasm. It carries out the reaction tRNA(Met) + L-methionine + ATP = L-methionyl-tRNA(Met) + AMP + diphosphate. Functionally, is required not only for elongation of protein synthesis but also for the initiation of all mRNA translation through initiator tRNA(fMet) aminoacylation. The polypeptide is Methionine--tRNA ligase (Saccharopolyspora erythraea (strain ATCC 11635 / DSM 40517 / JCM 4748 / NBRC 13426 / NCIMB 8594 / NRRL 2338)).